The sequence spans 487 residues: Zinc finger protein 345 (487 aa).

15 consecutive C2H2-type zinc fingers follow at residues 62–84 (LECK…QRIH), 90–112 (YECK…QRIH), 118–140 (YECN…QRIH), 146–168 (YECK…QIIH), 174–196 (YECK…HRIH), 202–224 (YECK…RRVH), 230–252 (YECK…QRIH), 258–280 (YICN…QRIH), 286–308 (YVCK…QRIH), 314–336 (YECK…QRMH), 342–364 (YECK…QRIH), 370–392 (YECK…QLIH), 398–420 (YECR…QRIH), 426–448 (YECK…QRMH), and 454–476 (YECK…KKNH).

The protein belongs to the krueppel C2H2-type zinc-finger protein family.

The protein resides in the nucleus. Its function is as follows. May be involved in transcriptional regulation. The protein is Zinc finger protein 345 (ZNF345) of Bos taurus (Bovine).